Here is an 894-residue protein sequence, read N- to C-terminus: Mitogen-activated protein kinase kinase kinase kinase 3 (894 aa).

Met-1 carries the post-translational modification N-acetylmethionine. In terms of domain architecture, Protein kinase spans 16–273 (FELIQRIGSG…AEKLLQHPFV (258 aa)). ATP contacts are provided by residues 22 to 30 (IGSGTYGDV) and Lys-45. The active-site Proton acceptor is the Asp-136. Phosphoserine is present on Ser-329. The interval 339–358 (DPPLRKETEPHHELPDSDGF) is disordered. Basic and acidic residues predominate over residues 340–353 (PPLRKETEPHHELP). A Phosphoserine modification is found at Ser-398. The tract at residues 408-537 (HVAHLEDDEG…VPKPISNGLP (130 aa)) is disordered. Residues 473–487 (HVPPRPPPPRLPPQK) are compositionally biased toward pro residues. Residues 508–520 (LYQQQSEQRGTNL) show a composition bias toward polar residues. A CNH domain is found at 556-867 (PLKIHCATSW…IFRLLGSDRV (312 aa)).

The protein belongs to the protein kinase superfamily. STE Ser/Thr protein kinase family. STE20 subfamily. Interacts with SH3GL2. Interaction appears to regulate MAP4K3-mediated JNK activation. The cofactor is Mg(2+).

It catalyses the reaction L-seryl-[protein] + ATP = O-phospho-L-seryl-[protein] + ADP + H(+). The enzyme catalyses L-threonyl-[protein] + ATP = O-phospho-L-threonyl-[protein] + ADP + H(+). Its function is as follows. Serine/threonine kinase that plays a role in the response to environmental stress. Appears to act upstream of the JUN N-terminal pathway. Activator of the Hippo signaling pathway which plays a pivotal role in organ size control and tumor suppression by restricting proliferation and promoting apoptosis. MAP4Ks act in parallel to and are partially redundant with STK3/MST2 and STK4/MST2 in the phosphorylation and activation of LATS1/2, and establish MAP4Ks as components of the expanded Hippo pathway. This chain is Mitogen-activated protein kinase kinase kinase kinase 3 (Map4k3), found in Mus musculus (Mouse).